The primary structure comprises 212 residues: Fibrillarin-like rRNA/tRNA 2'-O-methyltransferase (212 aa).

A disordered region spans residues 1 to 37 (MSEPNLPAGVERREIGGETRLATRGPPVYGEPTADGW). S-adenosyl-L-methionine contacts are provided by residues 74 to 75 (TT), 90 to 91 (EF), 115 to 116 (DA), and 136 to 139 (DVAT).

This sequence belongs to the methyltransferase superfamily. Fibrillarin family. As to quaternary structure, interacts with nop5. Component of box C/D small ribonucleoprotein (sRNP) particles that contain rpl7ae, FlpA and nop5, plus a guide RNA.

In terms of biological role, involved in pre-rRNA and tRNA processing. Utilizes the methyl donor S-adenosyl-L-methionine to catalyze the site-specific 2'-hydroxyl methylation of ribose moieties in rRNA and tRNA. Site specificity is provided by a guide RNA that base pairs with the substrate. Methylation occurs at a characteristic distance from the sequence involved in base pairing with the guide RNA. The sequence is that of Fibrillarin-like rRNA/tRNA 2'-O-methyltransferase from Halorubrum lacusprofundi (strain ATCC 49239 / DSM 5036 / JCM 8891 / ACAM 34).